We begin with the raw amino-acid sequence, 325 residues long: Phenylalanine--tRNA ligase alpha subunit (325 aa).

Residue glutamate 251 coordinates Mg(2+).

It belongs to the class-II aminoacyl-tRNA synthetase family. Phe-tRNA synthetase alpha subunit type 1 subfamily. Tetramer of two alpha and two beta subunits. Requires Mg(2+) as cofactor.

The protein localises to the cytoplasm. It catalyses the reaction tRNA(Phe) + L-phenylalanine + ATP = L-phenylalanyl-tRNA(Phe) + AMP + diphosphate + H(+). This is Phenylalanine--tRNA ligase alpha subunit from Thermotoga neapolitana (strain ATCC 49049 / DSM 4359 / NBRC 107923 / NS-E).